A 285-amino-acid chain; its full sequence is ATP phosphoribosyltransferase (285 aa).

Belongs to the ATP phosphoribosyltransferase family. Long subfamily. Requires Mg(2+) as cofactor.

The protein localises to the cytoplasm. The enzyme catalyses 1-(5-phospho-beta-D-ribosyl)-ATP + diphosphate = 5-phospho-alpha-D-ribose 1-diphosphate + ATP. Its pathway is amino-acid biosynthesis; L-histidine biosynthesis; L-histidine from 5-phospho-alpha-D-ribose 1-diphosphate: step 1/9. With respect to regulation, feedback inhibited by histidine. Catalyzes the condensation of ATP and 5-phosphoribose 1-diphosphate to form N'-(5'-phosphoribosyl)-ATP (PR-ATP). Has a crucial role in the pathway because the rate of histidine biosynthesis seems to be controlled primarily by regulation of HisG enzymatic activity. The chain is ATP phosphoribosyltransferase from Metallosphaera sedula (strain ATCC 51363 / DSM 5348 / JCM 9185 / NBRC 15509 / TH2).